The following is a 454-amino-acid chain: Apyrase (454 aa).

The Cytoplasmic portion of the chain corresponds to M1–H7. The helical; Signal-anchor for type II membrane protein transmembrane segment at F8–V28 threads the bilayer. Topologically, residues N29–S454 are extracellular. An ATP-binding site is contributed by V48 to R58. N-linked (GlcNAc...) asparagine glycosylation is present at N151. The active-site Proton acceptor is E170. Residue A194 to Q204 participates in ATP binding. Residue N262 is glycosylated (N-linked (GlcNAc...) asparagine).

It belongs to the GDA1/CD39 NTPase family. The cofactor is Ca(2+). The N-terminus is blocked.

The protein resides in the membrane. The enzyme catalyses a ribonucleoside 5'-triphosphate + 2 H2O = a ribonucleoside 5'-phosphate + 2 phosphate + 2 H(+). Its function is as follows. Catalyzes the hydrolysis of phosphoanhydride bonds of nucleoside tri- and di-phosphates. The chain is Apyrase (RROP1) from Solanum tuberosum (Potato).